The primary structure comprises 171 residues: Terminase, small subunit (171 aa).

This sequence belongs to the P23virus small terminase family. In terms of assembly, homononamer; forms a ring-like structure through which genomic DNA is translocated into the capsid. Heterodimer with the terminase large subunit; the active complex is probably heterooligomeric.

Functionally, the terminase small subunit binds to the packaging initiation site and regulates the ATPase activity of the terminase large subunit. The terminase lies at a unique vertex of the procapsid and is composed of two subunits, a small terminase subunit involved in viral DNA recognition (packaging sequence), and a large terminase subunit. Both terminase subunits heterooligomerize and are docked on the portal protein to form the packaging machine. The polypeptide is Terminase, small subunit (Thermus virus P23-45 (Thermus thermophilus phage P23-45)).